The sequence spans 400 residues: Enoyl-[acyl-carrier-protein] reductase [NADH] (400 aa).

Residues 48–53 (GSSSGY), 74–75 (FE), 111–112 (DA), and 139–140 (LA) each bind NAD(+). Substrate is bound at residue Y225. Catalysis depends on Y235, which acts as the Proton donor. Residues K244 and 273-275 (VVT) each bind NAD(+).

The protein belongs to the TER reductase family. Monomer.

The enzyme catalyses a 2,3-saturated acyl-[ACP] + NAD(+) = a (2E)-enoyl-[ACP] + NADH + H(+). Its pathway is lipid metabolism; fatty acid biosynthesis. In terms of biological role, involved in the final reduction of the elongation cycle of fatty acid synthesis (FAS II). Catalyzes the reduction of a carbon-carbon double bond in an enoyl moiety that is covalently linked to an acyl carrier protein (ACP). This chain is Enoyl-[acyl-carrier-protein] reductase [NADH], found in Aliivibrio salmonicida (strain LFI1238) (Vibrio salmonicida (strain LFI1238)).